We begin with the raw amino-acid sequence, 475 residues long: Exodeoxyribonuclease I (475 aa).

One can recognise an Exonuclease domain in the interval 13 to 192 (FHDYETFGTH…AMADVYATIA (180 aa)). Mg(2+)-binding residues include D15 and E17. Substrate is bound by residues E17 and R165. D186 contacts Mg(2+). The 154-residue stretch at 202 to 355 (PRLFDYLFTH…KVVAIFAEAE (154 aa)) folds into the ExoI SH3-like domain. Positions 358-475 (TPSDNVDAQL…ALWQYAEEIV (118 aa)) constitute an ExoI C-terminal domain.

In terms of assembly, monomer. Interacts with ssb (via C-terminus); this interaction stimulates the exonuclease activity by recruiting the enzyme to its substrate. It depends on Mg(2+) as a cofactor.

The catalysed reaction is Exonucleolytic cleavage in the 3'- to 5'-direction to yield nucleoside 5'-phosphates.. Inhibited by 10 mM EDTA. Degrades single-stranded DNA (ssDNA) in a highly processive manner. Also functions as a DNA deoxyribophosphodiesterase that releases deoxyribose-phosphate moieties following the cleavage of DNA at an apurinic/apyrimidinic (AP) site by either an AP endonuclease or AP lyase. The polypeptide is Exodeoxyribonuclease I (sbcB) (Escherichia coli (strain K12)).